The chain runs to 366 residues: Galactoside alpha-(1,2)-fucosyltransferase 1 (366 aa).

Topologically, residues 1–8 (MWPLSHRH) are cytoplasmic. Residues 9-25 (LCLAFLLVCVLSAISFF) traverse the membrane as a helical; Signal-anchor for type II membrane protein segment. The Lumenal portion of the chain corresponds to 26–366 (LHIHQDSFRH…LSPLWTLAEP (341 aa)). 3 N-linked (GlcNAc...) asparagine glycosylation sites follow: asparagine 66, asparagine 302, and asparagine 328.

The protein belongs to the glycosyltransferase 11 family.

The protein resides in the golgi apparatus. The protein localises to the golgi stack membrane. It carries out the reaction a beta-D-galactosyl-(1-&gt;4)-N-acetyl-beta-D-glucosaminyl derivative + GDP-beta-L-fucose = an alpha-L-Fuc-(1-&gt;2)-beta-D-Gal-(1-&gt;4)-beta-D-GlcNAc derivative + GDP + H(+). The catalysed reaction is a ganglioside GA1 + GDP-beta-L-fucose = a ganglioside Fuc-GA1 + GDP + H(+). The enzyme catalyses a beta-D-Gal-(1-&gt;3)-beta-D-GlcNAc-(1-&gt;3)-beta-D-Gal-(1-&gt;4)-beta-D-Glc-(1&lt;-&gt;1')-Cer(d18:1(4E)) + GDP-beta-L-fucose = alpha-L-fucosyl-(1-&gt;2)- beta-D-galactosyl-(1-&gt;3)-N-acetyl-beta-D-glucosaminyl-(1-&gt;3)-beta-D-galactosyl-(1-&gt;4)-beta-D-glucosyl-(1&lt;-&gt;1')-N-acylsphing-4-enine + GDP + H(+). It catalyses the reaction a neolactoside nLc4Cer(d18:1(4E)) + GDP-beta-L-fucose = a neolactoside IV(2)-alpha-Fuc-nLc4Cer(d18:1(4E)) + GDP + H(+). It carries out the reaction a ganglioside GM1 + GDP-beta-L-fucose = a ganglioside Fuc-GM1 + GDP + H(+). The catalysed reaction is beta-D-galactosyl-(1-&gt;3)-N-acetyl-D-galactosamine + GDP-beta-L-fucose = alpha-L-fucosyl-(1-&gt;2)-beta-D-galactosyl-(1-&gt;3)-N-acetyl-D-galactosamine + GDP + H(+). It participates in protein modification; protein glycosylation. Its function is as follows. Catalyzes the transfer of L-fucose, from a guanosine diphosphate-beta-L-fucose, to the terminal galactose residue of glycoconjugates through an alpha(1,2) linkage leading to H antigen synthesis that is an intermediate substrate in the synthesis of ABO blood group antigens. H antigen is essential for maturation of the glomerular layer of the main olfactory bulb, in cell migration and early cell-cell contacts during tumor associated angiogenesis. Preferentially fucosylates soluble lactose and to a lesser extent fucosylates glycolipids gangliosides GA1 and GM1a. The sequence is that of Galactoside alpha-(1,2)-fucosyltransferase 1 from Plecturocebus brunneus (Brown titi monkey).